A 4059-amino-acid polypeptide reads, in one-letter code: MMLAWLVSLLSMEVLLLAKPYSSFQFEPAEGSLAGGTWITVVFDGLDRSILYPNNGSQLQIDLVSVAIPTLRIPCDVSPAFVDLPVVTCQTRSLPSEADAGPYSLEMRSGEQVLGTPCPGSLDSCTFKFSKDQTPVLYQVYPASGVPGEVVSVYGRVITTWLETFDPDVDYIESPLILEAREDKWLTPCSLINRQTGSCFPIQEEHGLGNVQCRVEGDYIGSQNVSFSVFNKGRSMVHKEAWLISAKQELFLYQTYPEILSVFPKVGSLGGRTDIIITGDFFDPSARVTIAGIPCDIRYVSPRKIECTTRAPGNEARLTAPQAGNRGLRFEVGDATKDVELTEATPGYRWQIVPNASSPSGFWSKEGRPFRARLSGFFVAPQTNNYTFWIQADSQASLCFSSSEEPRTKVEVASVGVGTADWFDSWEQIGNEGSWHQKTTKLELQGGAKYYLEAEQHGIAPSRGMRIGVQIHNTWLNPDVVNTYLLEKHQIRARAQRLPEIQVLHVSGKGNFFLTWGNVSSQPVPANATAQQIQTTIEELLVVKCNLAPFSAHVLLRLGFEQGLEGSRSDGVRTSSTEPFCGRFSLGQLGHLILIPEAADKGYQLDRYPYLCLAYRGHMNKTLDMTVSFLFGFQTIMKNITCDWSLTDPHPESWQFTCINLWDTCLCHSEDIQSSLANTPLLAHRIDIRPVVPEAGLLYVDEIILADTNVTVSQADSGRACPGGNVVESVSVVGVPPVYSISSWLAGCGSELPLITACSVSTEGTGDGSELIEVTAQRLQRTSPPLGGHFFLYLSDTVIPDVPVRMSARQLHKLLQDSADESTSGYLNAGDFTVTEDLNSCYEHVWTLSWTTQTGDLPNFIRVSDQNLTGVNPTVTARVVYDGGVFLGPIFGDMLATANQQTQVAVQVNDIPAYCSGSCSFQYQQESTPSVDHVWYSLGSDVNLLVHFTGTGFPRDTQFLQVTVNKTSCEVLFSNETNVACELALLPVGVHQIFMLVIPSGLAVHASGEDLLLHVEPRLDAVEPSTAAEIGGRWVTLRGSSLEGVSLVLFGTQSCVIDAIRSNSQQIQCKVPPRGKDGYTVNVTVISGDHSTVLARAFTYVSSLNPVIVSLSRNRSSIAGGEILFLGMSLLVNYTDLDVQIHVQDTSAQVLSQTAWGLEVVLPPLVPGIHVISAFINGVSIRSQGVDLYIQYLTEVFSVEPCSGSLLGGTLLSLLGTGLGRDPALIRVLVDNHPCDIVNLTEVNIWCETPPAVLPPRADVLTVLASVEIWAGNTSFFHGPSLVGKGFTFTYEAAATPVVTAMWGEFRNNSVRFYVEGSNISDSVILLGSLKCELEVQFFGDSMNLSGCFFPLHSLEAGVYTLQVRHKRMGFANMSVVPQKFELSPQIIAIFPTHGSKCGGTVLTVKGMAFSSRKRSVHVDISGPFACMILSLEDHTVLCQTRFVGDQFSEASLALNITVLVNGLTSKCKGNCTLFIEEAATPIVDALTISISGSLTMVLMRGRRLATTADEPIAFVDDQLPCHTTFFNTSHVACQIRDLAPGFHYLSAVHTSAGYACLNSVSRNFFIVPQVLDYFPKDFSIHGGSLLTIKGTALRGWKATVVYVGRQACLTVNFSSDFIQCIVPAGNGSAALEIDVNGVLYHIGLVDYSSIFTPELLSVSRSQDILTFTVARISGAANVDIFIGTSPCLGVAGNRTVLQCMVPLLPAGEYLVTGYDHSRGWASSTLILVLRATVTSVTKNYGCLGGRLLHVLGAGFSPGNISAAVCGAPCQVLANATVSAFSCLVLPLHVSLAFLCDLRHAEDSCKVRSSTYLRCDLTVSMGTERLPGSWPYVYLCEESSLCLFEPDHWTESVFPSFSGLFLSPKVERDEVLIYNSSCNITMETEAEMECEMPNQPITAKITEIQKSWGQNTQGNFSFQFCRRWSRPHSWFPQRVPHDGDSVTVETGHLLLLDANTSFLNSLHIKGGKLIFMDPGPIELRAHSILITDGGELHIGSEEKPFQGKARIKIYGSVHSTPFFPYGVKFLAVRNGTLSLHGSVPEVTVTYLQAAAHAGDKVLTLGEAVDWKPGDEAVITSGMTVAGAEATEVVVVETVHNADLHLRNPLRYSYDFRENWVAGENPILKPTVALLSRNIIIQGNFTLERVKLLNSCQEANTAKGNLKHCLYSKSEKMLGARDLGARVIIQSFPEEPSFVKLKGVQFRDLGQAFHKHLSSLALVGAMRGSYIQSCSVWNSFSRGLSMHRTWGLKVDSNVFYKIVGHALLLGSYLDGRFSTSETVTGRKNGWWEQGSTIRNNVIISVSAAEGLSGSEMLAPAGIYTFSPTNVMEGNRVCAAGYGYVFHLVTSQTLQAPLLSFNWNTAHSCTRYGLLVYPKFQPPWNNDTGFTLFQNFMVWGSAGGAQIFRSNNLHLKNFQVYACRDFGIDILESDANTLITDSFLLGHFTHKGSLCMSAGIKTPQRWELTISNTTFVNFDGNCVAIRTCSGCFQGQGGYTVKTRQLKFVNSSNLVAFPFPHAAVLEDLDGSLSGKNGSHVLASMETLSDTCLTNASFSQIVPGSVCGEAVLFHRMSIALANSLDVPKNLTITDISNKTITVNYVEDTLSNYYGWMALLLDQETYSLQFESPWMNRSLQYSATFDSFAPGNYLLIMHRDLPPYPDILLRCGSQVGHSLPFHPLPSQDRACDWFFNRQLRQLTYLVSGEGQVKVFLQLKPGVPPSVSASTSVPESASRWSLPETWQDVEKGWGGYNHTIPGPGDDVLILPNKTVLVDTDLPVLRCLYVMGTLEFPVDRSNVLSVACLLIAGGELKVGTLENPLEKDQRLLIFLRASEEVVCDYFEGIHVDPGTIGVYGKLRLHSAYPKKSWVHLGADIAPGNERIIVHNAVDWQPHDTIVLSSSSYEAHEAEVLTVKEVKGHHIRIYERLKHRHIGSTHTMEDGQQVHLAAEVGLLTRNIRIQPDSSCRGRLLVGSFRKSSGEDFSGVLQLLNVEIQNMGLPLYSSIEFTGVSAGSWVISSTVHQSCSVGIHASSSHGVILTDNVVFGTNGHGIDVEGQNYSLTNNLVILTMQSANSSPWVAGIKVNYAEDIILHGNVVAGSERLGFHVGGHGCSSEVLWSDNVVHSSLHGLHLYKKHESNNCTGVSGFMAFKNFDYGAMVQTENSVDIQNITLVDNTVGLLAITYVSSALLSSVSTVQITLRNSVIVATSSSFDCIHDRKAPQSANWTSTDRAPSNPRGGRIGILWPVSASEPNAWPQEPWHKVRSRHSVPGIMKLQDVTFSSFVKSCYSNDLDVCILPNEYSTGVMYPITAERTRMLGIKDKNKFYFPVLQSSKDLVGTICPTLVCEYPRKYLFTDLDGRTLGLPPPVSVFPRTEEEWTGSFLNTGIFREEQKCTFRAMNQGFFCKQTEHAVLILDNVDATWTIPKSHPLVSVTNGFVDTFSIVKDSDLCPPTSSLSTFYSILPTRQMTKVCFPEQTPPFLRFLLLGNQRASKLILAVFYNEIQSPHVFLDKSFIPPTPLESAFSLLAEPSGANYFDIMNNLLYVVLQGEEPVEIHSSVSIHLALTVTFSVLEKGWERAMLESLSDFFQIDPNQIRLTLEMPGNKETLEAIANSERKRKRNCPSVTCGGPSIRYGQRRPLMAEMTSLKITPATTLETFSKVIVIEVGDLPNIRNSEPIQSLPSNRLQRLVNQVITAQQTGALENVLGMTVGALLVTQSKGVTGYRNASSLITGNLIYTRPSELSILVQPSDGEVGIELPVQPRLVFLDEKNERVESLGLPSEPWIISVSLEGASESVLKGCTLAETRDGYVTFSRLAVLISGSNWHLFFTVISPPGTNFTARSRTFVVLPVASKERSTIILALSLCSVASWVALSCLVCCWFKKSKTRKIKPEDISESQAKEQKKNTHNSSKPRGLQAKTAKENTLMGEDMRMKVMQGMQSQFPQHSMDGVSKRKVSRLAVTEERTTTPAPKIPRITCVPGSLAQQLTLQEPGNWQEAQQQLLRYQLAGRNQLLLLRPDLRQERKQGQEPSQLDKGSDCTGLSQEKATCIPTETFSLHTAPPETIQ.

An N-terminal signal peptide occupies residues 1-18; it reads MMLAWLVSLLSMEVLLLA. Over 19–3851 the chain is Extracellular; the sequence is KPYSSFQFEP…LPVASKERST (3833 aa). Residues 25–109 form the IPT/TIG 1; atypical domain; the sequence is QFEPAEGSLA…AGPYSLEMRS (85 aa). Residues asparagine 55 and asparagine 224 are each glycosylated (N-linked (GlcNAc...) asparagine). IPT/TIG domains lie at 135–230 and 257–333; these read PVLY…FSVF and PEIL…FEVG. The 161-residue stretch at 323–483 folds into the PA14 domain; sequence AGNRGLRFEV…TWLNPDVVNT (161 aa). N-linked (GlcNAc...) asparagine glycans are attached at residues asparagine 355, asparagine 385, asparagine 518, asparagine 527, asparagine 620, asparagine 639, asparagine 709, asparagine 867, asparagine 965, asparagine 975, asparagine 1082, asparagine 1114, asparagine 1133, asparagine 1239, asparagine 1273, asparagine 1308, asparagine 1319, asparagine 1344, asparagine 1373, asparagine 1456, asparagine 1471, asparagine 1528, asparagine 1613, asparagine 1627, asparagine 1694, asparagine 1760, asparagine 1775, asparagine 1875, asparagine 1879, asparagine 1915, asparagine 1955, asparagine 2030, and asparagine 2139. IPT/TIG domains are found at residues 945 to 997 and 1017 to 1100; these read LVHF…FMLV and PRLD…AFTY. In terms of domain architecture, IPT/TIG 6; atypical spans 1106 to 1190; that stretch reads PVIVSLSRNR…IRSQGVDLYI (85 aa). In terms of domain architecture, IPT/TIG 7 spans 1198–1266; sequence SVEPCSGSLL…RADVLTVLAS (69 aa). The IPT/TIG 8; atypical domain maps to 1297–1378; sequence PVVTAMWGEF…MGFANMSVVP (82 aa). In terms of domain architecture, IPT/TIG 9 spans 1385–1466; that stretch reads PQIIAIFPTH…ITVLVNGLTS (82 aa). 2 IPT/TIG domains span residues 1482–1566 and 1569–1637; these read PIVD…RNFF and PQVL…IDVN. The IPT/TIG 12; atypical domain occupies 1654–1738; sequence PELLSVSRSQ…VLRATVTSVT (85 aa). Residues 1928 to 2049 enclose the G8 1 domain; it reads HSWFPQRVPH…PEVTVTYLQA (122 aa). PbH1 repeat units lie at residues 2244–2266 and 2287–2321; these read TWGL…LLGS and EQGS…YTFS. Asparagine 2380 is a glycosylation site (N-linked (GlcNAc...) asparagine). PbH1 repeat units follow at residues 2404–2426 and 2459–2481; these read SNNL…DILE and RWEL…AIRT. N-linked (GlcNAc...) asparagine glycans are attached at residues asparagine 2466, asparagine 2503, asparagine 2529, asparagine 2547, asparagine 2581, asparagine 2589, asparagine 2627, asparagine 2747, and asparagine 2762. A G8 2 domain is found at 2741–2867; sequence KGWGGYNHTI…PKKSWVHLGA (127 aa). 2 PbH1 repeats span residues 3004 to 3026 and 3027 to 3049; these read SAGS…HASS and SHGV…DVEG. An N-linked (GlcNAc...) asparagine glycan is attached at asparagine 3051. A PbH1 7 repeat occupies 3080-3102; that stretch reads AEDIILHGNVVAGSERLGFHVGG. Asparagine 3133 and asparagine 3162 each carry an N-linked (GlcNAc...) asparagine glycan. The stretch at 3188-3212 is one PbH1 8 repeat; it reads TVQITLRNSVIVATSSSFDCIHDRK. N-linked (GlcNAc...) asparagine glycosylation is found at asparagine 3218, asparagine 3719, and asparagine 3831. Residues 3852 to 3872 traverse the membrane as a helical segment; that stretch reads IILALSLCSVASWVALSCLVC. Residues 3869 to 3886 are ciliary targeting sequence (CST); sequence CLVCCWFKKSKTRKIKPE. Topologically, residues 3873–4059 are cytoplasmic; the sequence is CWFKKSKTRK…LHTAPPETIQ (187 aa). Over residues 3885–3898 the composition is skewed to basic and acidic residues; sequence PEDISESQAKEQKK. The tract at residues 3885–3915 is disordered; it reads PEDISESQAKEQKKNTHNSSKPRGLQAKTAK. The nuclear localization signal (NLS) stretch occupies residues 3946 to 3970; it reads KRKVSRLAVTEERTTTPAPKIPRIT. The disordered stretch occupies residues 4015–4038; sequence QERKQGQEPSQLDKGSDCTGLSQE.

In terms of assembly, interacts with CAMLG. Interacts with PKD2. Interacts (via CST) with ARF4; this interaction allows an efficient PKHD1 trafficking to the cilium. Interacts (via CST) with RAB8A; this interaction controls trafficking through the endomembrane systeme and to the cilium. Interacts (via CST) with TULP3; this interaction allows PKHD1 trafficking to the cilium. In terms of processing, palmitoylated. Palmitoylation facilitates the trafficking to the cilia and membrane targeting. Post-translationally, N-glycosylated. Several proteolytic cleavages occur within the extracellular domain, whereas at least one cleavage occurs within the cytoplasmic domain. Cleaved by a probable proprotein convertase which produces an extracellular domain (polyductin extracellular domain, (PECD)) and a C-terminal fragment (polyductin transmembrane fragment (PTM)) which are tethered together by disulfide bonds. This extracellular domain (PECD) is then shed from the primary cilium by activation of a member of the ADAM metalloproteinase disintegrins family, resulting in concomitant release of an intra-cellular C-terminal fragment (ICD) via a gamma-secretase-dependent process. The proteolytic cleavage of the C-terminal intracellular fragment (ICD) is controlled by cytosolic calcium concentration and activation of PKC. As to expression, expressed in bile ducts and distal nephron segments but is absent from the proximal tubule. Expressed in pancreas and kidney but also in the liver. Expressed primarily in the distal tubule and thick ascending limb of the loop of Henle, and at low-level in the proximal tubule before renal development is complete at P0.

It is found in the cell membrane. The protein resides in the cytoplasm. Its subcellular location is the apical cell membrane. The protein localises to the cytoskeleton. It localises to the cilium basal body. It is found in the cell projection. The protein resides in the cilium. Its subcellular location is the spindle. The protein localises to the chromosome. It localises to the centromere. It is found in the nucleus. The protein resides in the secreted. Its subcellular location is the extracellular exosome. The protein localises to the endoplasmic reticulum. It localises to the golgi apparatus. Promotes ciliogenesis in renal epithelial cells and therefore participates in the tubules formation and/or ensures the maintenance of the architecture of the lumen of the kidney. Has an impact on cellular symmetry by ensuring correct bipolar cell division through the regulation of centrosome duplication and mitotic spindle assembly and by maintaining oriented cell division (OCD) during tubular elongation through planar cell polarity (PCP) pathway. During epithelial cell morphogenesis, it also regulates cell-cell and cell-matrix adhesion and participates in cell motility. Promotes cell-cell contact through the positive regulation of PTK2 kinase activity leading to either positive regulation of epithelial cell proliferation through the HRAS/RAF1 pathways, or negative regulation of apoptosis through the PDK1/AKT1 pathway. May act in collecting-duct and biliary differentiation. May participate in the regulation of the cholangiocytes proliferation and the CCN2 production in an CXCL8-dependent manner. This is Fibrocystin from Mus musculus (Mouse).